Consider the following 359-residue polypeptide: Peptide chain release factor 1 (359 aa).

Q235 is subject to N5-methylglutamine. The segment at 283–309 is disordered; it reads QKAESERSQARRSQVGSGDRSERIRTY.

The protein belongs to the prokaryotic/mitochondrial release factor family. In terms of processing, methylated by PrmC. Methylation increases the termination efficiency of RF1.

The protein resides in the cytoplasm. Its function is as follows. Peptide chain release factor 1 directs the termination of translation in response to the peptide chain termination codons UAG and UAA. This is Peptide chain release factor 1 from Brucella melitensis biotype 2 (strain ATCC 23457).